We begin with the raw amino-acid sequence, 349 residues long: Probable G-protein coupled receptor 21 (349 aa).

Over 1-32 the chain is Extracellular; sequence MNSTWDGNQSSHPFCLLALGYLETVRFCLLEV. Residues Asn2 and Asn8 are each glycosylated (N-linked (GlcNAc...) asparagine). A helical transmembrane segment spans residues 33 to 53; the sequence is LIIVFLTVLIISGNIIVIFVF. At 54–75 the chain is on the cytoplasmic side; sequence HCAPLLNHHSTSYFIQTMAYAD. The chain crosses the membrane as a helical span at residues 76 to 96; that stretch reads LLVGVSCLVPSLSLLYYPLPI. Over 97–104 the chain is Extracellular; sequence EEAMTCQV. Residues 105 to 125 form a helical membrane-spanning segment; it reads FGFVVSVLKSISMASLACISI. The Cytoplasmic portion of the chain corresponds to 126–147; sequence DRYIAITKPLTYNTLVTPWRLR. The helical transmembrane segment at 148–168 threads the bilayer; that stretch reads LCIFLIWLYSTLVFLPSFFHW. Residues 169 to 191 lie on the Extracellular side of the membrane; that stretch reads GKPGYHGDVFQWCAESWHTNSYF. A helical membrane pass occupies residues 192-212; sequence TLFIVMMLYAPAALIVCFTYF. At 213–252 the chain is on the cytoplasmic side; the sequence is NIFRICQQHTKEISERQARFSSQNGETGEPQTCPDKRYAM. A helical transmembrane segment spans residues 253-273; it reads VLFRITSVFYVLWLPYIIYFL. The Extracellular portion of the chain corresponds to 274-283; the sequence is LESSTGCSSR. A helical transmembrane segment spans residues 284–304; the sequence is LASFLTTWLAISNSFCNCIIY. Residues 305-349 lie on the Cytoplasmic side of the membrane; that stretch reads SLSNSVFQRGLKGLSGSLCTSCASHTTAKDPYTVRCKGPPNGSHI.

Belongs to the G-protein coupled receptor 1 family.

It is found in the cell membrane. Orphan receptor. This Mus musculus (Mouse) protein is Probable G-protein coupled receptor 21 (Gpr21).